The primary structure comprises 143 residues: Large ribosomal subunit protein uL11 (143 aa).

It belongs to the universal ribosomal protein uL11 family. Part of the ribosomal stalk of the 50S ribosomal subunit. Interacts with L10 and the large rRNA to form the base of the stalk. L10 forms an elongated spine to which L12 dimers bind in a sequential fashion forming a multimeric L10(L12)X complex. One or more lysine residues are methylated.

Forms part of the ribosomal stalk which helps the ribosome interact with GTP-bound translation factors. This Cutibacterium acnes (strain DSM 16379 / KPA171202) (Propionibacterium acnes) protein is Large ribosomal subunit protein uL11.